A 568-amino-acid polypeptide reads, in one-letter code: Peroxisomal leader peptide-processing protease (568 aa).

The segment at 332-568 (TPRGLPLRDL…PLSEVPRSKL (237 aa)) is serine protease. Residues His-374, Asp-410, and Ser-483 each act as charge relay system in the active site.

Belongs to the peptidase S1B family. In terms of assembly, homodimer. Forms a heterodimer with the C-terminal cleavage product (49 kDa form). Forms a heterodimer with the N-terminal cleavage product (10 kDa form). Interacts with PEX5. Interacts with LONP2. In terms of processing, self-cleavage gives rise to an N-terminal 10-kDa fragment and C-terminal 49-kDa fragment upon import into the peroxisomes. The full-lengh TYSND1 is the active the proteolytic processing of PTS1- and PTS2-proteins and in self-cleavage, and intermolecular self-cleavage of TYSND1 down-regulates its protease activity.

The protein localises to the peroxisome. Inhibited by N-ethylmaleimide (NEM). Not affected by leupeptin or trans-epoxysuccinyl-l-leucylamido-(4-gianidino) butane (E64). Peroxisomal protease that mediates both the removal of the leader peptide from proteins containing a PTS2 target sequence and processes several PTS1-containing proteins. Catalyzes the processing of PTS1-proteins involved in the peroxisomal beta-oxidation of fatty acids. This chain is Peroxisomal leader peptide-processing protease (Tysnd1), found in Mus musculus (Mouse).